The sequence spans 466 residues: MGFLAIVLSVALLFRSTSGTPLGPRGKHSDCNSVDHGYQCFPELSHKWGLYAPYFSLQDESPFPLDVPEDCHITFVQVLARHGARSPTHSKTKAYAATIAAIQKSATAFPGKYAFLQSYNYSLDSEELTPFGRNQLRDLGAQFYERYNALTRHINPFVRATDASRVHESAEKFVEGFQTARQDDHHANPHQPSPRVDVAIPEGSAYNNTLEHSLCTAFESSTVGDDAVANFTAVFAPAIAQRLEADLPGVQLSTDDVVNLMAMCPFETVSLTDDAHTLSPFCDLFTATEWTQYNYLLSLDKYYGYGGGNPLGPVQGVGWANELMARLTRAPVHDHTCVNNTLDASPATFPLNATLYADFSHDSNLVSIFWALGLYNGTAPLSQTSVESVSQTDGYAAAWTVPFAARAYVEMMQCRAEKEPLVRVLVNDRVMPLHGCPTDKLGRCKRDAFVAGLSFAQAGGNWADCF.

The N-terminal stretch at 1–19 is a signal peptide; it reads MGFLAIVLSVALLFRSTSG. Cys31 and Cys40 are disulfide-bonded. Tyr51, Arg81, His82, Arg85, and Thr88 together coordinate 1D-myo-inositol hexakisphosphate. 4 cysteine pairs are disulfide-bonded: Cys71/Cys414, Cys215/Cys465, Cys264/Cys282, and Cys436/Cys444. His82 functions as the Nucleophile in the catalytic mechanism. Asn120 carries N-linked (GlcNAc...) asparagine glycosylation. Arg165 is a 1D-myo-inositol hexakisphosphate binding site. Asn207 and Asn230 each carry an N-linked (GlcNAc...) asparagine glycan. Lys301 lines the 1D-myo-inositol hexakisphosphate pocket. Asn339 and Asn352 each carry an N-linked (GlcNAc...) asparagine glycan. His361 and Asp362 together coordinate 1D-myo-inositol hexakisphosphate. Residue Asn376 is glycosylated (N-linked (GlcNAc...) asparagine).

The protein belongs to the histidine acid phosphatase family. Monomer.

It localises to the secreted. It catalyses the reaction 1D-myo-inositol hexakisphosphate + H2O = 1D-myo-inositol 1,2,4,5,6-pentakisphosphate + phosphate. The catalysed reaction is 1D-myo-inositol 1,2,4,5,6-pentakisphosphate + H2O = 1D-myo-inositol 1,2,5,6-tetrakisphosphate + phosphate. The enzyme catalyses 1D-myo-inositol 1,2,5,6-tetrakisphosphate + H2O = 1D-myo-inositol 1,2,6-trisphosphate + phosphate. It carries out the reaction 1D-myo-inositol 1,2,6-trisphosphate + H2O = 1D-myo-inositol 1,2-bisphosphate + phosphate. It catalyses the reaction 1D-myo-inositol 1,2-bisphosphate + H2O = 1D-myo-inositol 2-phosphate + phosphate. In terms of biological role, catalyzes the phosphate monoester hydrolysis of phytic acid (myo-inositol hexakisphosphate), which results in the stepwise formation of myo-inositol pentakis-, tetrakis-, tris-, bis-, and monophosphates, as well as the liberation of inorganic phosphate. Myo-inositol 2-monophosphate is the end product. Has a broad substrate specificity and is also able to dephosphorylate other classic acid phosphatase substrates such as p-nitrophenyl phosphate, phenyl phosphate, fructose 1,6-bisphosphate, glucose 6-phosphate, 3-phosphoglycerate, as well as ADP and ATP. The polypeptide is Phytase A (Aspergillus terreus).